We begin with the raw amino-acid sequence, 141 residues long: Cystatin (141 aa).

The signal sequence occupies residues Met-1 to Met-26. The region spanning Gly-29 to Trp-129 is the Cystatin domain. A Secondary area of contact motif is present at residues Gln-73 to Gly-77. 2 cysteine pairs are disulfide-bonded: Cys-91–Cys-107 and Cys-120–Cys-140.

Belongs to the cystatin family. In terms of tissue distribution, expressed by the venom gland at an extremely low level (at protein level).

It localises to the secreted. Its function is as follows. Inhibits various C1 cysteine proteases including cathepsin L, papain and cathepsin B. This protein has no toxic activity and its function in the venom is unknown. It may play a role as a housekeeping or regulatory protein. This chain is Cystatin, found in Tropidechis carinatus (Australian rough-scaled snake).